The chain runs to 363 residues: MDMDSAHLDSSLLTLAFRLIKAAQTAAPSVLADLLAEGAPAWFQDDDLGWSCLHYAAERKEPECLEVLLQGGAVWNAVDKWGRTAGEICLSLGDEEGWSIIRNEGIRSEDKTSAGDNLVFLKSKLTWDVGKDGKERVLDADGNGVMMGWEEPLSYCIVVEHVKRLTEEHPKAELGAEGMSILNVGFGLGIVDRLFQECDPKPSHHTIIEAHPQVLEYIHKKGVHLLPNVRILQGRWQDWLLDGEKVGDVLSGTPDGMGFDAIFVDTFAEGYEDLKAFFEVIPDILNADNGRFSFWNGLGATNPTIYAVSSSLAELHLEDVGLQVEWHDVLIPESMREEVWKGVRRRYWDLPGYRLPIAKMSLI.

2 ANK repeats span residues 22–46 and 48–80; these read AAQT…FQDD and LGWS…AVDK. Residues 111–363 enclose the RMT2 domain; it reads KTSAGDNLVF…RLPIAKMSLI (253 aa). S-adenosyl-L-methionine-binding positions include phenylalanine 120, 186–191, 209–211, 236–237, and aspartate 265; these read FGLGIV, EAH, and WQ.

Belongs to the class I-like SAM-binding methyltransferase superfamily. RMT2 methyltransferase family. In terms of assembly, monomer.

It is found in the cytoplasm. It localises to the nucleus. In terms of biological role, S-adenosyl-L-methionine-dependent protein-arginine N-methyltransferase that methylates the delta-nitrogen atom of arginine residues to form N5-methylarginine (type IV) in target proteins. Monomethylates ribosomal protein L12. This Cryptococcus neoformans var. neoformans serotype D (strain B-3501A) (Filobasidiella neoformans) protein is Protein arginine N-methyltransferase 2.